The following is a 360-amino-acid chain: MWIDLLARERSDKMSEGEGQAKNRLFLGIDLGTSHTAVMTSRGKKFLLKSVVGYPKDVIGLKLLGRPYVVGDEAFEMRSYLDLRYPLQDGVLSEISDRDIEVARHLLTHVVKSAEPGANDEICAVIGVPARASGANKALLLKMAQEVVHTALVVSEPFMVGYGLDKLNNTIIVDIGAGTTDICALKGTVPGPEDQVTLTKAGNYLDERLQNAILERHPELQMNTNVACAVKEQFSFVGARGEAATFEFRAAGKPVRCDVTESVKIACEALMPDIIESIEILLRSFQPEYQATVLQNIVFAGGGSRIRGLAAYVKDKLRPFGNADVTCVKDPTFDGCRGALRLAEELPPQYWCQLGDVSGQ.

ATP-binding positions include K22, 33–34 (TS), and D89. E156 lines the Mg(2+) pocket. Residues 177-179 (AGT), 231-235 (KEQFS), and G302 each bind ATP.

It belongs to the FtsA/MreB family. MamK subfamily. As to quaternary structure, forms cytoplasmic filaments. Interacts with MamJ. Forms filaments in the absence of other magnetosome proteins and in E.coli. Filament formation in vitro requires ATP, GTP or a non-hydrolyzable ATP analog.

The protein localises to the cytoplasm. It is found in the cytoskeleton. The catalysed reaction is ATP + H2O = ADP + phosphate + H(+). Its activity is regulated as follows. Filament dynamics depend partially on MamJ. Its function is as follows. Protein with ATPase activity which forms dynamic cytoplasmic filaments that are involved in sorting, concatenating and/or correctly positioning of magnetosomes in the cell. Not absolutely necessary for assembly of short chains. Filaments grow from the both cell poles towards midcell, and are probably disassembled at the other end of the cell, a process known as treadmilling. Polymerizes in the presence of ATP, GTP or a non-hydrolyzable ATP analog. Required for correct segregation and positioning of magnetosomes following cell division. The protein is Actin-like protein MamK of Magnetospirillum gryphiswaldense (strain DSM 6361 / JCM 21280 / NBRC 15271 / MSR-1).